The sequence spans 173 residues: Large ribosomal subunit protein bL9 (173 aa).

The protein belongs to the bacterial ribosomal protein bL9 family.

Functionally, binds to the 23S rRNA. The sequence is that of Large ribosomal subunit protein bL9 from Chlamydia felis (strain Fe/C-56) (Chlamydophila felis).